The chain runs to 439 residues: Ribosomal protein uS12 methylthiotransferase RimO (439 aa).

An MTTase N-terminal domain is found at 5 to 115 (PRISFTSLGC…VLDAVHRALP (111 aa)). [4Fe-4S] cluster is bound by residues C14, C50, C79, C146, C150, and C153. The 238-residue stretch at 132-369 (LTPRHYAYLK…MARQQKISAR (238 aa)) folds into the Radical SAM core domain. A TRAM domain is found at 372-438 (KRKVGTRQQI…QYDLHGSVAG (67 aa)).

The protein belongs to the methylthiotransferase family. RimO subfamily. It depends on [4Fe-4S] cluster as a cofactor.

The protein resides in the cytoplasm. It carries out the reaction L-aspartate(89)-[ribosomal protein uS12]-hydrogen + (sulfur carrier)-SH + AH2 + 2 S-adenosyl-L-methionine = 3-methylsulfanyl-L-aspartate(89)-[ribosomal protein uS12]-hydrogen + (sulfur carrier)-H + 5'-deoxyadenosine + L-methionine + A + S-adenosyl-L-homocysteine + 2 H(+). Functionally, catalyzes the methylthiolation of an aspartic acid residue of ribosomal protein uS12. The sequence is that of Ribosomal protein uS12 methylthiotransferase RimO from Bradyrhizobium diazoefficiens (strain JCM 10833 / BCRC 13528 / IAM 13628 / NBRC 14792 / USDA 110).